A 142-amino-acid chain; its full sequence is HTH-type transcriptional regulator MntR (142 aa).

The HTH dtxR-type domain maps to 1–63 (MPTPSMEDYI…YEKYRGLVLT (63 aa)). Mn(2+)-binding residues include D8, E11, H77, E99, E102, and H103.

Belongs to the DtxR/MntR family. As to quaternary structure, homodimer.

It localises to the cytoplasm. Its activity is regulated as follows. DNA binding is strongly activated by Mn(2+). Central regulator of manganese homeostasis. The sequence is that of HTH-type transcriptional regulator MntR from Bacillus cereus (strain AH820).